A 141-amino-acid chain; its full sequence is Large ribosomal subunit protein uL16 (141 aa).

Positions 1–20 (MLMPKRTKYRKQQKGRNRGK) are disordered.

Belongs to the universal ribosomal protein uL16 family. As to quaternary structure, part of the 50S ribosomal subunit.

Its function is as follows. Binds 23S rRNA and is also seen to make contacts with the A and possibly P site tRNAs. This Nautilia profundicola (strain ATCC BAA-1463 / DSM 18972 / AmH) protein is Large ribosomal subunit protein uL16.